A 293-amino-acid polypeptide reads, in one-letter code: METSTFTTKVGLAQMLKGGVIMDVVTPDQAKIAEEAGAVAVMALERVPADIRKDGGVARMSDPEMIQGIIEAVTIPVMAKSRIGHFVEAQILEAIGVDYIDESEVLTPADEEHHTNKHNFKVPFVCGARNLGEALRRITEGAAMIRTKGEAGTGNVVEAVRHARTMFAEIRRLQTLDPDELFVAAKNLQAPYELVKQIAELGRLPVVNFAAGGIATPADAALMMQLGVDGVFVGSGIFKSGNPAKRAKAIVEATTHFRDAKLLAEISRNLGEAMVGINIDTIPENELLAKRGW.

Position 23 (D23) interacts with D-ribose 5-phosphate. The active-site Schiff-base intermediate with D-ribose 5-phosphate is the K80. G152 provides a ligand contact to D-ribose 5-phosphate. R164 is a D-glyceraldehyde 3-phosphate binding site. Residues G213 and 234–235 (GS) each bind D-ribose 5-phosphate.

Belongs to the PdxS/SNZ family. As to quaternary structure, in the presence of PdxT, forms a dodecamer of heterodimers.

It carries out the reaction aldehydo-D-ribose 5-phosphate + D-glyceraldehyde 3-phosphate + L-glutamine = pyridoxal 5'-phosphate + L-glutamate + phosphate + 3 H2O + H(+). It participates in cofactor biosynthesis; pyridoxal 5'-phosphate biosynthesis. Its function is as follows. Catalyzes the formation of pyridoxal 5'-phosphate from ribose 5-phosphate (RBP), glyceraldehyde 3-phosphate (G3P) and ammonia. The ammonia is provided by the PdxT subunit. Can also use ribulose 5-phosphate and dihydroxyacetone phosphate as substrates, resulting from enzyme-catalyzed isomerization of RBP and G3P, respectively. The protein is Pyridoxal 5'-phosphate synthase subunit PdxS of Herpetosiphon aurantiacus (strain ATCC 23779 / DSM 785 / 114-95).